The following is a 667-amino-acid chain: Probable potassium transport system protein Kup (667 aa).

12 helical membrane passes run 5–25 (GLLI…LYVM), 47–67 (ISLI…IIAL), 88–108 (AAWL…DGTL), 133–153 (VSNQ…LFSI), 164–184 (AFGP…LINI), 210–230 (AGFA…ALYS), 243–263 (SWPF…VWIL), 287–307 (LASI…LITG), 336–356 (IYIP…VLFF), 367–387 (GLSI…WLVL), 393–413 (LANL…MGSS), and 420–440 (GGYV…VWYF).

It belongs to the HAK/KUP transporter (TC 2.A.72) family.

The protein localises to the cell membrane. It carries out the reaction K(+)(in) + H(+)(in) = K(+)(out) + H(+)(out). Its function is as follows. Transport of potassium into the cell. Likely operates as a K(+):H(+) symporter. The sequence is that of Probable potassium transport system protein Kup from Lactobacillus delbrueckii subsp. bulgaricus (strain ATCC 11842 / DSM 20081 / BCRC 10696 / JCM 1002 / NBRC 13953 / NCIMB 11778 / NCTC 12712 / WDCM 00102 / Lb 14).